Reading from the N-terminus, the 351-residue chain is Protein arginine N-methyltransferase 1-B (351 aa).

Positions 30–331 (KDYYFDSYAH…KNNRDLDFTV (302 aa)) constitute an SAM-dependent MTase PRMT-type domain. Positions 43, 52, 76, 98, and 127 each coordinate S-adenosyl-L-methionine. Catalysis depends on residues E142 and E151.

Belongs to the class I-like SAM-binding methyltransferase superfamily. Protein arginine N-methyltransferase family. Homodimer. Homooctamer; individual homodimers associates to form a homooctamer and homooligomerization is required for proper localization to the cell membrane. Individual homodimers can associate to form a homohexamer. Component of a complex with lsm14a/rap55a. Interacts with cirbp. As to expression, from the onset of gastrulation, expressed in dorsal mesoderm, and in dorsal and ventral ectoderm. At the neurula and tail bud stages, expression is restricted to the neuroectoderm, with highest expression in the anterior neural plate.

The protein resides in the nucleus. It is found in the nucleoplasm. Its subcellular location is the cytoplasm. The protein localises to the cytosol. It carries out the reaction L-arginyl-[protein] + 2 S-adenosyl-L-methionine = N(omega),N(omega)-dimethyl-L-arginyl-[protein] + 2 S-adenosyl-L-homocysteine + 2 H(+). It catalyses the reaction L-arginyl-[protein] + S-adenosyl-L-methionine = N(omega)-methyl-L-arginyl-[protein] + S-adenosyl-L-homocysteine + H(+). The catalysed reaction is N(omega)-methyl-L-arginyl-[protein] + S-adenosyl-L-methionine = N(omega),N(omega)-dimethyl-L-arginyl-[protein] + S-adenosyl-L-homocysteine + H(+). Arginine methyltransferase that methylates (mono and asymmetric dimethylation) the guanidino nitrogens of arginyl residues present in target proteins. Constitutes the main enzyme that mediates monomethylation and asymmetric dimethylation of histone H4 'Arg-4' (H4R3me1 and H4R3me2a, respectively), a specific tag for epigenetic transcriptional activation. Methylates ilf3 to regulate its DNA-binding activity. Required for neural induction, playing a key role in the control of epidermal versus neural cell fate choice. This Xenopus laevis (African clawed frog) protein is Protein arginine N-methyltransferase 1-B (prmt1-b).